Consider the following 689-residue polypeptide: Methionine--tRNA ligase (689 aa).

The 'HIGH' region signature appears at 15 to 25; the sequence is PYANGPIHLGH. Zn(2+)-binding residues include Cys146, Cys149, Cys159, and Cys162. The short motif at 332–336 is the 'KMSKS' region element; sequence KMSKS. Residue Lys335 coordinates ATP. The 102-residue stretch at 588–689 folds into the tRNA-binding domain; sequence DFAKIDLRIA…EGAQPGMRVK (102 aa).

Belongs to the class-I aminoacyl-tRNA synthetase family. MetG type 1 subfamily. As to quaternary structure, homodimer. Zn(2+) is required as a cofactor.

Its subcellular location is the cytoplasm. It carries out the reaction tRNA(Met) + L-methionine + ATP = L-methionyl-tRNA(Met) + AMP + diphosphate. In terms of biological role, is required not only for elongation of protein synthesis but also for the initiation of all mRNA translation through initiator tRNA(fMet) aminoacylation. This chain is Methionine--tRNA ligase, found in Shewanella sp. (strain W3-18-1).